A 562-amino-acid polypeptide reads, in one-letter code: NAD-dependent malic enzyme (562 aa).

Y101 functions as the Proton donor in the catalytic mechanism. Position 154 (R154) interacts with NAD(+). The Proton acceptor role is filled by K172. 3 residues coordinate a divalent metal cation: E243, D244, and D267. The NAD(+) site is built by D267 and N415.

The protein belongs to the malic enzymes family. In terms of assembly, homotetramer. The cofactor is Mg(2+). Requires Mn(2+) as cofactor.

The catalysed reaction is (S)-malate + NAD(+) = pyruvate + CO2 + NADH. The enzyme catalyses oxaloacetate + H(+) = pyruvate + CO2. This is NAD-dependent malic enzyme from Aliivibrio fischeri (strain ATCC 700601 / ES114) (Vibrio fischeri).